The following is a 385-amino-acid chain: Transcription termination factor 2, mitochondrial (385 aa).

A mitochondrion-targeting transit peptide spans 1–35 (MLWKLLLRSQSCRLCSFRKMRSPPKYRPFLACFTY).

It belongs to the mTERF family. As to quaternary structure, monomer. In terms of tissue distribution, expressed in skeletal muscle, heart, liver and pancreas.

The protein localises to the mitochondrion. Its subcellular location is the mitochondrion matrix. It localises to the mitochondrion nucleoid. In terms of biological role, binds mitochondrial DNA and plays a role in the regulation of transcription of mitochondrial mRNA and rRNA species. The protein is Transcription termination factor 2, mitochondrial (MTERF2) of Homo sapiens (Human).